An 88-amino-acid chain; its full sequence is Arminin 1c (88 aa).

The first 18 residues, 1–18 (MKPVFVILFLTCIAFTYA), serve as a signal peptide directing secretion. A propeptide spanning residues 19-57 (ESYEDVKEEIKNEVEREIFEDLEEESDVLDSNVREFNDA) is cleaved from the precursor. Valine 85 carries the valine amide modification.

It belongs to the arminin family. As to expression, expressed in entodermal epithelium along the body column.

It is found in the secreted. The protein resides in the target cell membrane. Functionally, antimicrobial peptide with a broad-spectrum antimicrobial activity. Keeps its antibacterial activity under a wide range of salt concentrations that mimic physiological conditions of human blood, which is surprising, since Hydra is an obligate freshwater animal with nearly no salt tolerance. Does not affect red blood cells. In Hydra vulgaris (Hydra), this protein is Arminin 1c.